The chain runs to 1033 residues: E3 ubiquitin-protein ligase Topors (1033 aa).

Over residues Met1 to Ser10 the composition is skewed to pro residues. Residues Met1–Arg36 form a disordered region. The required for DNA-binding stretch occupies residues Glu52–Tyr376. Residues Lys74, Lys77, Lys84, and Lys89 each participate in a glycyl lysine isopeptide (Lys-Gly) (interchain with G-Cter in SUMO2) cross-link. A Phosphoserine modification is found at Ser99. The RING-type zinc finger occupies Cys104–Lys143. Lys160 participates in a covalent cross-link: Glycyl lysine isopeptide (Lys-Gly) (interchain with G-Cter in SUMO2). A Phosphoserine modification is found at Ser196. Lys251 is covalently cross-linked (Glycyl lysine isopeptide (Lys-Gly) (interchain with G-Cter in SUMO2)). Disordered stretches follow at residues Gln414–Asp477 and Val496–Leu692. Residues Val434 to Asp444 are compositionally biased toward low complexity. The segment at Ser438–Asp574 is sumoylation and localization to discrete nuclear foci. An interaction with SUMO1 region spans residues Ser438–Ser654. A compositionally biased stretch (polar residues) spans Thr455 to Thr464. Positions Ser457–Ser731 are interaction with p53/TP53. The segment at Ser457 to His879 is interaction with TOP1. The span at Asn465–Asp477 shows a compositional bias: low complexity. A Phosphoserine modification is found at Ser500. The span at Pro507–Glu518 shows a compositional bias: basic and acidic residues. Low complexity predominate over residues Ser522–Ser535. A compositionally biased stretch (basic and acidic residues) spans Leu540–Ser566. Lys561 participates in a covalent cross-link: Glycyl lysine isopeptide (Lys-Gly) (interchain with G-Cter in SUMO). Residue Ser585 is modified to Phosphoserine. 2 stretches are compositionally biased toward basic residues: residues Arg613–Arg629 and Pro637–Arg647. The span at Ser654–Arg669 shows a compositional bias: low complexity. Lys701 is covalently cross-linked (Glycyl lysine isopeptide (Lys-Gly) (interchain with G-Cter in SUMO2)). Disordered stretches follow at residues Arg713–Asp934 and Thr970–Ser1033. Ser718 carries the post-translational modification Phosphoserine; by PLK1. The span at Arg721–Tyr730 shows a compositional bias: basic residues. Residues Ser731 to Arg747 are compositionally biased toward polar residues. Ser734 is modified (phosphoserine). Residues Ser770–Ser780 are compositionally biased toward low complexity. Positions Phe815–Ser837 are enriched in basic and acidic residues. Residues Lys818 and Lys834 each participate in a glycyl lysine isopeptide (Lys-Gly) (interchain with G-Cter in SUMO2) cross-link. Over residues Lys851 to Arg860 the composition is skewed to basic residues. The interaction with UBE2I stretch occupies residues Lys851–Glu914. Phosphoserine is present on residues Ser861 and Ser863. Residues Lys877–His894 are compositionally biased toward basic residues. Phosphoserine is present on residues Ser909, Ser911, Ser999, Ser1016, and Ser1025. Polar residues predominate over residues Thr992–Ala1008.

As to quaternary structure, interacts with TOP1. Interacts with the SUMO1 conjugating enzyme UBE2I. Interacts with SUMO1. Interacts with NKX3-1; polyubiquitinates NKX3-1 and induces its proteasomal degradation. Interacts with SIN3A; sumoylates SIN3A. Interacts with IKBKE; induced by DNA damage. Interacts with p53/TP53. Interacts with PARK7/DJ-1. In terms of processing, phosphorylation at Ser-99 regulates the E3 ubiquitin-protein ligase activity but not the SUMO1-protein ligase activity. Phosphorylation at Ser-718 increases the E3 ubiquitin-protein ligase activity versus the E3 SUMO1-protein ligase activity resulting in increased p53/TP53 ubiquitination and degradation. Post-translationally, sumoylated.

Its subcellular location is the nucleus. It localises to the PML body. The enzyme catalyses S-ubiquitinyl-[E2 ubiquitin-conjugating enzyme]-L-cysteine + [acceptor protein]-L-lysine = [E2 ubiquitin-conjugating enzyme]-L-cysteine + N(6)-ubiquitinyl-[acceptor protein]-L-lysine.. Functionally, functions as an E3 ubiquitin-protein ligase and as a E3 SUMO1-protein ligase. Probable tumor suppressor involved in cell growth, cell proliferation and apoptosis that regulates p53/TP53 stability through ubiquitin-dependent degradation. May regulate chromatin modification through sumoylation of several chromatin modification-associated proteins. May be involved in DNA-damage-induced cell death through IKBKE sumoylation. The protein is E3 ubiquitin-protein ligase Topors (Topors) of Mus musculus (Mouse).